Consider the following 242-residue polypeptide: uncharacterized protein (242 aa).

Residue 8–15 participates in NADP(+) binding; sequence TGASGGIG. Ser137 contacts substrate. Residue Tyr150 is the Proton acceptor of the active site.

This sequence belongs to the short-chain dehydrogenases/reductases (SDR) family.

This is an uncharacterized protein from Bacillus subtilis (strain 168).